A 222-amino-acid chain; its full sequence is Dual specificity phosphatase 29 (222 aa).

In terms of domain architecture, Tyrosine-protein phosphatase spans 54-202 (HVNEVWPKLY…LRELDKQLVQ (149 aa)). 146–153 (HCAMGRSR) is a binding site for substrate. Residue Cys147 is the Phosphocysteine intermediate of the active site. Residues 201-222 (VQQRRGAQHRGEAGEKAGEKEP) form a disordered region. The span at 209-222 (HRGEAGEKAGEKEP) shows a compositional bias: basic and acidic residues.

The protein belongs to the protein-tyrosine phosphatase family. Non-receptor class dual specificity subfamily. In terms of assembly, homodimer. Interacts with PRKAA2.

It is found in the cytoplasm. Its subcellular location is the nucleus. It catalyses the reaction O-phospho-L-tyrosyl-[protein] + H2O = L-tyrosyl-[protein] + phosphate. The enzyme catalyses O-phospho-L-seryl-[protein] + H2O = L-seryl-[protein] + phosphate. The catalysed reaction is O-phospho-L-threonyl-[protein] + H2O = L-threonyl-[protein] + phosphate. Its function is as follows. Dual specificity phosphatase able to dephosphorylate phosphotyrosine, phosphoserine and phosphothreonine residues within the same substrate, with a preference for phosphotyrosine as a substrate. Involved in the modulation of intracellular signaling cascades. In skeletal muscle regulates systemic glucose homeostasis by activating, AMPK, an energy sensor protein kinase. Affects MAP kinase signaling though modulation of the MAPK1/2 cascade in skeletal muscle promoting muscle cell differentiation, development and atrophy. The polypeptide is Dual specificity phosphatase 29 (DUSP29) (Sus scrofa (Pig)).